Here is a 336-residue protein sequence, read N- to C-terminus: Pentalenene synthase (336 aa).

Mg(2+)-binding residues include D80, D84, N219, S223, and E227. The DDXXD motif signature appears at 80 to 84 (DDLFD).

Belongs to the terpene synthase family. In terms of assembly, monomer. Mg(2+) is required as a cofactor.

It carries out the reaction (2E,6E)-farnesyl diphosphate = pentalenene + diphosphate. It functions in the pathway antibiotic biosynthesis; neopentalenolactone biosynthesis. Catalyzes the cyclization of farnesyl diphosphate (FPP) to the tricyclic sesquiterpene pentalenene in the biosynthesis of neopentalenolactone antibiotic. This is Pentalenene synthase (ptlA) from Streptomyces avermitilis (strain ATCC 31267 / DSM 46492 / JCM 5070 / NBRC 14893 / NCIMB 12804 / NRRL 8165 / MA-4680).